A 337-amino-acid chain; its full sequence is Heat-inducible transcription repressor HrcA (337 aa).

Belongs to the HrcA family.

Its function is as follows. Negative regulator of class I heat shock genes (grpE-dnaK-dnaJ and groELS operons). Prevents heat-shock induction of these operons. The sequence is that of Heat-inducible transcription repressor HrcA from Pseudarthrobacter chlorophenolicus (strain ATCC 700700 / DSM 12829 / CIP 107037 / JCM 12360 / KCTC 9906 / NCIMB 13794 / A6) (Arthrobacter chlorophenolicus).